An 85-amino-acid polypeptide reads, in one-letter code: U4-theraphotoxin-Hhn1a (85 aa).

A signal peptide spans 1–22 (MKVTLIAILTCAAVLVLHTTAA). Positions 23–48 (EELEAESQLMKVGMPDTELAAVDEER) are excised as a propeptide. 3 cysteine pairs are disulfide-bonded: Cys-52–Cys-66, Cys-56–Cys-77, and Cys-71–Cys-82.

Belongs to the neurotoxin 12 (Hwtx-2) family. 02 (Hwtx-2) subfamily. Monomer. In terms of tissue distribution, expressed by the venom gland.

The protein localises to the secreted. Functionally, neurotoxin active on both insects and mammals. The polypeptide is U4-theraphotoxin-Hhn1a (Cyriopagopus hainanus (Chinese bird spider)).